An 898-amino-acid chain; its full sequence is Protein argonaute 1 (898 aa).

Positions 1–52 (MLALNAGSQYPGRGRGRGRGDGGNRVHKHDGINRYHGGFRGGRGGGGGGFRD) are disordered. Residues 18-33 (GRGDGGNRVHKHDGIN) are compositionally biased toward basic and acidic residues. A compositionally biased stretch (gly residues) spans 38–50 (GFRGGRGGGGGGF). The 96-residue stretch at 283–378 (KCSDEMRRLR…IFADRTKMSR (96 aa)) folds into the PAZ domain. A Piwi domain is found at 542 to 883 (FAMVKLRTKE…YARKYGSLKS (342 aa)).

It belongs to the argonaute family.

Its subcellular location is the cytoplasm. Its function is as follows. Involved in RNA-mediated gene silencing (RNAi) of mobile elements and repeats including retroposons SLACS (Spliced Leader Associated Conserved Sequence), TATE (Telomere-Associated Transposable Element) and TAS-like sequences (Telomere Associated Sequence), and a family of 74-nucleotide long tandem repeats, CIR74. Predominantly binds to siRNAs derived from SLACS and TATE transposable elements and to a lesser extent to siRNAs from TAS-like and CIR74 elements. This is Protein argonaute 1 from Leishmania braziliensis.